Here is a 359-residue protein sequence, read N- to C-terminus: Src kinase-associated phosphoprotein 2 (359 aa).

3 positions are modified to phosphoserine: Ser-5, Ser-6, and Ser-9. The segment at 14 to 64 (PEEIRNLLADVETFVADILKGENLSKKAKEKRESLIKKIKDVKSIYLQEFQ) is homodimerization. The disordered stretch occupies residues 66–88 (KGDAEDGEEYDDPFAGPPDTISL). At Tyr-75 the chain carries Phosphotyrosine. A phosphoserine mark is found at Ser-87 and Ser-90. The PH domain occupies 116-219 (FVLKAGYLEK…WVQQLKFVLQ (104 aa)). A phosphotyrosine mark is found at Tyr-151 and Tyr-197. Ser-223 bears the Phosphoserine mark. Tyr-261 carries the phosphotyrosine modification. A disordered region spans residues 264-293 (LPEEEEDSAPVKVEEQRKMSQDSVHHTSGD). The span at 275-293 (KVEEQRKMSQDSVHHTSGD) shows a compositional bias: basic and acidic residues. 2 positions are modified to phosphoserine: Ser-283 and Ser-286. Positions 297 to 358 (DYANFYQGLW…PKAYIMEMYD (62 aa)) constitute an SH3 domain.

This sequence belongs to the SKAP family. As to quaternary structure, homodimer. Interacts with PTPNS1. Part of a complex consisting of SKAP2, FYB1 and PTPNS1. Part of a complex consisting of SKAP2, FYB1 and LILRB3. May interact with actin. Interacts with FYB1, which is required for SKAP2 protein stability. Interacts with LAT, GRB2, PTK2B and PRAM1. May interact with FYN, HCK and LYN. Interacts with FASLG. In terms of processing, phosphorylated in resting platelets. Phosphorylated by FYN on Tyr-261 upon T-cell activation. Dephosphorylated on Tyr-75 by PTPN22. In terms of tissue distribution, ubiquitously expressed. Present in platelets (at protein level).

Its subcellular location is the cytoplasm. Its function is as follows. May be involved in B-cell and macrophage adhesion processes. In B-cells, may act by coupling the B-cell receptor (BCR) to integrin activation. May play a role in src signaling pathway. In Homo sapiens (Human), this protein is Src kinase-associated phosphoprotein 2 (SKAP2).